A 412-amino-acid chain; its full sequence is Odorant receptor 47b (412 aa).

At Met1 to Thr74 the chain is on the cytoplasmic side. The helical transmembrane segment at Ile75–Asp95 threads the bilayer. The Extracellular portion of the chain corresponds to Leu96 to Ala103. The helical transmembrane segment at Leu104–Ser124 threads the bilayer. Topologically, residues Asp125–Ala169 are cytoplasmic. Residues Ala170–Phe190 traverse the membrane as a helical segment. Over Gln191–Ser229 the chain is Extracellular. Residues Thr230–Asp250 traverse the membrane as a helical segment. Residues Met251–Thr302 lie on the Cytoplasmic side of the membrane. A helical membrane pass occupies residues Phe303 to Met323. Over Leu324 to Leu330 the chain is Extracellular. Residues Ser331–Ala351 traverse the membrane as a helical segment. Topologically, residues Phe352–Phe389 are cytoplasmic. Residues Thr390–Glu410 form a helical membrane-spanning segment. Over Ser411–Met412 the chain is Extracellular.

Belongs to the insect chemoreceptor superfamily. Heteromeric odorant receptor channel (TC 1.A.69) family. Or49a subfamily. As to quaternary structure, interacts with Orco. Complexes exist early in the endomembrane system in olfactory sensory neurons (OSNs), coupling these complexes to the conserved ciliary trafficking pathway. As to expression, expressed in olfactory sensory neurons in the antenna.

The protein localises to the cell membrane. Odorant receptor which mediates acceptance or avoidance behavior, depending on its substrates. The odorant receptor repertoire encodes a large collection of odor stimuli that vary widely in identity, intensity, and duration. May form a complex with Orco to form odorant-sensing units, providing sensitive and prolonged odorant signaling and calcium permeability. Plays an important role in sociosexual interactions since its enhances courtship in a pheromone-dependent manner. The chain is Odorant receptor 47b (Or47b) from Drosophila melanogaster (Fruit fly).